We begin with the raw amino-acid sequence, 281 residues long: MAAAALLRRSPAARALLSPALSSRLVASKPHSSSPAPPPPPSKAGANTKTFSIYRWDPDSPSTKPHLKDYKVDLSDCGPMVLDVLLKIKNEQDPSLTFRRSCREGICGSCAMNIDGDNGLACLTKISSASSASTISPLPHMFVIKDLVVDMTNFYNQYKSVEPWLKRKDAPPQPGKEIPQTKADRAKLDGMYECILCACCSTSCPSYWWNPEEYLGPAALLHANRWIQDSRDQFTKERLDSINDEFKLYRCHTIKNCTHACPKGLNPAKHIDTIKKLQLEA.

Residues 1-25 constitute a mitochondrion transit peptide; that stretch reads MAAAALLRRSPAARALLSPALSSRL. Positions 26 to 48 are disordered; sequence VASKPHSSSPAPPPPPSKAGANT. In terms of domain architecture, 2Fe-2S ferredoxin-type spans 49 to 141; that stretch reads KTFSIYRWDP…ASTISPLPHM (93 aa). The [2Fe-2S] cluster site is built by cysteine 102, cysteine 107, and cysteine 122. In terms of domain architecture, 4Fe-4S ferredoxin-type spans 184-214; sequence DRAKLDGMYECILCACCSTSCPSYWWNPEEY. 3 residues coordinate [4Fe-4S] cluster: cysteine 194, cysteine 197, and cysteine 200. Cysteine 204 contacts [3Fe-4S] cluster. Tryptophan 209 provides a ligand contact to a ubiquinone. Cysteine 251 and cysteine 257 together coordinate [3Fe-4S] cluster. Cysteine 261 is a [4Fe-4S] cluster binding site.

The protein belongs to the succinate dehydrogenase/fumarate reductase iron-sulfur protein family. In terms of assembly, component of complex II composed of eight subunits in plants: four classical SDH subunits SDH1, SDH2, SDH3 and SDH4 (a flavoprotein (FP), an iron-sulfur protein (IP), and a cytochrome b composed of a large and a small subunit.), as well as four subunits unknown in mitochondria from bacteria and heterotrophic eukaryotes. The cofactor is [2Fe-2S] cluster. [3Fe-4S] cluster serves as cofactor. It depends on [4Fe-4S] cluster as a cofactor.

It localises to the mitochondrion inner membrane. The catalysed reaction is a quinone + succinate = fumarate + a quinol. It functions in the pathway carbohydrate metabolism; tricarboxylic acid cycle; fumarate from succinate (eukaryal route): step 1/1. In terms of biological role, iron-sulfur protein (IP) subunit of succinate dehydrogenase (SDH) that is involved in complex II of the mitochondrial electron transport chain and is responsible for transferring electrons from succinate to ubiquinone (coenzyme Q). In Oryza sativa subsp. japonica (Rice), this protein is Succinate dehydrogenase [ubiquinone] iron-sulfur subunit 1, mitochondrial.